The chain runs to 426 residues: Alpha-ionylideneethane synthase abl3 (426 aa).

This sequence belongs to the alpha-ionylideneethane synthase family.

It functions in the pathway hormone biosynthesis. Its function is as follows. Alpha-ionylideneethane synthase; part of the gene cluster that mediates the biosynthesis of abscisic acid (ABA), a phytohormone that acts antagonistically toward salicylic acid (SA), jasmonic acid (JA) and ethylene (ETH) signaling, to impede plant defense responses. The first step of the pathway catalyzes the reaction from farnesyl diphosphate to alpha-ionylideneethane performed by the alpha-ionylideneethane synthase abl3 via a three-step reaction mechanism involving 2 neutral intermediates, beta-farnesene and allofarnesene. The cytochrome P450 monooxygenase abl1 might then be involved in the conversion of alpha-ionylideneethane to alpha-ionylideneacetic acid. Alpha-ionylideneacetic acid is further converted to abscisic acid in 2 steps involving the cytochrome P450 monooxygenase abl2 and the short-chain dehydrogenase/reductase abl4, via the intermediates 1'-deoxy-ABA or 1',4'-trans-diol-ABA, depending on the order of action of these 2 enzymes. Abl2 is responsible for the hydroxylation of carbon atom C-1' and abl4 might be involved in the oxidation of the C-4' carbon atom. The sequence is that of Alpha-ionylideneethane synthase abl3 from Leptosphaeria maculans (strain JN3 / isolate v23.1.3 / race Av1-4-5-6-7-8) (Blackleg fungus).